A 377-amino-acid chain; its full sequence is DNA dC-&gt;dU-editing enzyme APOBEC-3G (377 aa).

The interval 1–60 is essential for cytoplasmic localization; that stretch reads MNPQIRNMVEQMEPDIFVYYFNNRPILSGRNTVWLCYEVKTKDPSGPPLDANIFQGKLYP. CMP/dCMP-type deaminase domains are found at residues 29–138 and 214–327; these read GRNT…LRIL and GQRE…LRTL. A Phosphothreonine; by PKA modification is found at T32. 3 residues coordinate Zn(2+): H65, C97, and C100. The tract at residues 209 to 335 is necessary for homooligomerization; sequence KPWVSGQRET…TLHRDGAKIA (127 aa). The interaction with DNA stretch occupies residues 213–215; it reads SGQ. T218 bears the Phosphothreonine; by PKA and CAMK2 mark. Zn(2+) is bound at residue H257. The active-site Proton donor is E259. Residues C287 and C290 each contribute to the Zn(2+) site. The tract at residues 312 to 319 is interaction with DNA; it reads RIYDDQGR.

Belongs to the cytidine and deoxycytidylate deaminase family. Homodimer. Homooligomer. Can bind RNA to form ribonucleoprotein complexes of high-molecular-mass (HMM) or low-molecular-mass (LMM). HMM is inactive and heterogeneous in protein composition because of binding nonselectively to cellular RNAs, which in turn are associated with variety of cellular proteins. The LMM form which is enzymatically active has few or no RNAs associated. Its ability to form homooligomer is distinct from its ability to assemble into HMM. Interacts with APOBEC3B, APOBEC3F, MOV10, AGO2, EIF4E, EIF4ENIF1, DCP2 and DDX6 in an RNA-dependent manner. Interacts with AGO1, AGO3 and PKA/PRKACA. Zn(2+) serves as cofactor.

It is found in the cytoplasm. It localises to the nucleus. The protein localises to the P-body. It carries out the reaction a 2'-deoxycytidine in single-stranded DNA + H2O + H(+) = a 2'-deoxyuridine in single-stranded DNA + NH4(+). Its function is as follows. DNA deaminase (cytidine deaminase) which acts as an inhibitor of retrovirus replication and retrotransposon mobility via deaminase-dependent and -independent mechanisms. Exhibits antiviral activity against vif-deficient: HIV-1 and simian immunodeficiency viruses (SIVs) and also simian foamy virus (SFV). After the penetration of retroviral nucleocapsids into target cells of infection and the initiation of reverse transcription, it can induce the conversion of cytosine to uracil in the minus-sense single-strand viral DNA, leading to G-to-A hypermutations in the subsequent plus-strand viral DNA. The resultant detrimental levels of mutations in the proviral genome, along with a deamination-independent mechanism that works prior to the proviral integration, together exert efficient antiretroviral effects in infected target cells. Selectively targets single-stranded DNA and does not deaminate double-stranded DNA or single- or double-stranded RNA. May inhibit the mobility of LTR retrotransposons. This is DNA dC-&gt;dU-editing enzyme APOBEC-3G (APOBEC3G) from Chlorocebus aethiops (Green monkey).